The chain runs to 1374 residues: Y' element ATP-dependent helicase YLL066C (1374 aa).

The disordered stretch occupies residues 321–345 (AGEAASSDHDQKISRVTRKRPREPK). One can recognise a Helicase ATP-binding domain in the interval 375-552 (EIYMADTPSV…LQRIGLTGLA (178 aa)). 388-395 (APPGYGKT) is an ATP binding site. Residues 498 to 501 (DEFH) carry the DEAH box motif. Residues 609–758 (KLLLALFEIE…EFYGLESKKG (150 aa)) form the Helicase C-terminal domain. Residues 832–975 (ANASTNATTN…ATTTESTNAS (144 aa)) are compositionally biased toward low complexity. The interval 832 to 999 (ANASTNATTN…RFHPVTDINK (168 aa)) is disordered. Residues 976–999 (AKEDANKDGNAEDNRFHPVTDINK) show a composition bias toward basic and acidic residues.

Belongs to the helicase family. Yeast subtelomeric Y' repeat subfamily.

Its function is as follows. Catalyzes DNA unwinding and is involved in telomerase-independent telomere maintenance. The protein is Y' element ATP-dependent helicase YLL066C of Saccharomyces cerevisiae (strain ATCC 204508 / S288c) (Baker's yeast).